A 464-amino-acid chain; its full sequence is MASESGKLWGGRFVGAVDPIMEKFNASIAYDRHLWEVDVQGSKAYSRGLEKAGLLTKAEMDQILHGLDKVAEEWAQCTFKLSPNDEDIHTANERRLKELIGETAGKLHTGRSRNDQVVTDLRLWMRQTCSTLSGLLWELIRTMVDRAEAERDVLFPGYTHLQRAQPIRWSHWILSHAVALTRDSERLLEVRKRINVLPLGSGAIAGNPLSVDRELLRAELNFGAITLNSMDATSERDFVAEFLFWASLCMTHLSRMAEDLILYCTKEFSFVQLSDAYSTGSSLMPQKKNPDSLELIRSKAGRVFGRCAGLLMTLKGLPSTYNKDLQEDKEAVFEVSDTMSAVLQVATGVISTLQIHRENMGQALSPDMLATDLAYYLVRKGMPFRQAHEASGKAVFMAETKGVALNELSLQELQTISPLFSGDVSCVWDYGHSVEQYGALGGTARSSVDWQIRQVRALLQTQQA.

Alanine 2 is subject to N-acetylalanine. N6-acetyllysine is present on lysine 7. Position 27 (serine 27) interacts with 2-(N(omega)-L-arginino)succinate. Lysine 69 is subject to N6-acetyllysine. Residues asparagine 114 and threonine 159 each coordinate 2-(N(omega)-L-arginino)succinate. Histidine 160 serves as the catalytic Proton acceptor. Residue serine 281 is the Proton donor of the active site. Lysine 288 carries the post-translational modification N6-acetyllysine. 2-(N(omega)-L-arginino)succinate-binding residues include asparagine 289, tyrosine 321, glutamine 326, and lysine 329.

Belongs to the lyase 1 family. Argininosuccinate lyase subfamily. Homotetramer. Forms tissue-specific complexes with ASS1, SLC7A1, HSP90AA1 and nitric oxide synthase NOS1, NOS2 or NOS3; the complex maintenance is independent of ASL catalytic function. Post-translationally, acetylation modifies enzyme activity in response to alterations of extracellular nutrient availability. Acetylation increased with trichostin A (TSA) or with nicotinamide (NAM). Glucose increases acetylation by about a factor of 3 with decreasing enzyme activity. Acetylation on Lys-288 is decreased on the addition of extra amino acids resulting in activation of enzyme activity.

The catalysed reaction is 2-(N(omega)-L-arginino)succinate = fumarate + L-arginine. It functions in the pathway amino-acid biosynthesis; L-arginine biosynthesis; L-arginine from L-ornithine and carbamoyl phosphate: step 3/3. Its pathway is nitrogen metabolism; urea cycle; L-arginine and fumarate from (N(omega)-L-arginino)succinate: step 1/1. Enzyme activity is regulated by acetylation. Functionally, catalyzes the reversible cleavage of L-argininosuccinate to fumarate and L-arginine, an intermediate step reaction in the urea cycle mostly providing for hepatic nitrogen detoxification into excretable urea as well as de novo L-arginine synthesis in nonhepatic tissues. Essential regulator of intracellular and extracellular L-arginine pools. As part of citrulline-nitric oxide cycle, forms tissue-specific multiprotein complexes with argininosuccinate synthase ASS1, transport protein SLC7A1 and nitric oxide synthase NOS1, NOS2 or NOS3, allowing for cell-autonomous L-arginine synthesis while channeling extracellular L-arginine to nitric oxide synthesis pathway. This Macaca fascicularis (Crab-eating macaque) protein is Argininosuccinate lyase (ASL).